A 207-amino-acid polypeptide reads, in one-letter code: Thymidylate kinase (207 aa).

7–14 (GCEGSGKS) provides a ligand contact to ATP.

Belongs to the thymidylate kinase family.

The enzyme catalyses dTMP + ATP = dTDP + ADP. Phosphorylation of dTMP to form dTDP in both de novo and salvage pathways of dTTP synthesis. This chain is Thymidylate kinase, found in Chlamydia felis (strain Fe/C-56) (Chlamydophila felis).